The chain runs to 216 residues: MEPAFWQQRWADNQIGFHQAQVNPYLQTYWPQLQLAPGSRVLVPLCGKSLDLAWLAGQGHRVLGVELSRRAVEDFFREHGLEAEVRQQGAFEVWRSGDVQLWCGDFFALRAEDVADCVGLYDRAAVIALPVQMRARYMQLLSGLLPTSCRGLVVTLDYDQSLLAGPPFSVRDEELRQGFAGWQVEQLEAVEVIEESPKFVQAGASSLLERVYRLSR.

The S-adenosyl-L-methionine site is built by W10, L45, E66, and R123.

The protein belongs to the class I-like SAM-binding methyltransferase superfamily. TPMT family.

It is found in the cytoplasm. It carries out the reaction S-adenosyl-L-methionine + a thiopurine = S-adenosyl-L-homocysteine + a thiopurine S-methylether.. The chain is Thiopurine S-methyltransferase from Pseudomonas putida (strain ATCC 700007 / DSM 6899 / JCM 31910 / BCRC 17059 / LMG 24140 / F1).